Here is a 157-residue protein sequence, read N- to C-terminus: 2-C-methyl-D-erythritol 2,4-cyclodiphosphate synthase (157 aa).

The a divalent metal cation site is built by D8 and H10. Residues 8 to 10 (DVH) and 34 to 35 (HS) each bind 4-CDP-2-C-methyl-D-erythritol 2-phosphate. H42 contributes to the a divalent metal cation binding site. Residues 56-58 (DIG), 61-65 (FPDTD), 100-106 (AQAPKMA), 132-135 (TTTE), F139, and R142 contribute to the 4-CDP-2-C-methyl-D-erythritol 2-phosphate site.

It belongs to the IspF family. As to quaternary structure, homotrimer. The cofactor is a divalent metal cation.

The catalysed reaction is 4-CDP-2-C-methyl-D-erythritol 2-phosphate = 2-C-methyl-D-erythritol 2,4-cyclic diphosphate + CMP. The protein operates within isoprenoid biosynthesis; isopentenyl diphosphate biosynthesis via DXP pathway; isopentenyl diphosphate from 1-deoxy-D-xylulose 5-phosphate: step 4/6. Its function is as follows. Involved in the biosynthesis of isopentenyl diphosphate (IPP) and dimethylallyl diphosphate (DMAPP), two major building blocks of isoprenoid compounds. Catalyzes the conversion of 4-diphosphocytidyl-2-C-methyl-D-erythritol 2-phosphate (CDP-ME2P) to 2-C-methyl-D-erythritol 2,4-cyclodiphosphate (ME-CPP) with a corresponding release of cytidine 5-monophosphate (CMP). In Edwardsiella ictaluri (strain 93-146), this protein is 2-C-methyl-D-erythritol 2,4-cyclodiphosphate synthase.